The following is a 341-amino-acid chain: Protein MENT (341 aa).

The first 23 residues, 1-23 (MVPAAGALLWVLLLNLGPRAAGA), serve as a signal peptide directing secretion. A disordered region spans residues 115-196 (AGKDSTSREL…SPSPTAMPSP (82 aa)). A compositionally biased stretch (polar residues) spans 127–155 (ATPNTAGSSSTRFIANSQEPEIRLTSSLP).

In terms of processing, phosphorylation sites are present in the extracellular medium. In terms of tissue distribution, plasma. Overexpressed in lymphomas.

The protein localises to the secreted. In terms of biological role, involved in control of cellular proliferation. Onconcogenic modifier contributing to the tumor suppressor function of DNMT3B. The protein is Protein MENT (MENT) of Homo sapiens (Human).